The following is an 891-amino-acid chain: Extended synaptotagmin-3 (891 aa).

A disordered region spans residues 1–30 (MQPEEPCAPSAPGGPDVPERGQRSRDPGPR). Residues 1–32 (MQPEEPCAPSAPGGPDVPERGQRSRDPGPRLS) lie on the Cytoplasmic side of the membrane. Residues 17–28 (VPERGQRSRDPG) show a composition bias toward basic and acidic residues. The helical transmembrane segment at 33–53 (GQLLPELYSFVARVLFYLAPV) threads the bilayer. A topological domain (lumenal) is located at residue tyrosine 54. The chain crosses the membrane as a helical span at residues 55–75 (LAGYLGLSVTWLLLGALLWMW). The Cytoplasmic segment spans residues 76 to 891 (WRRNRRGKLG…ELTADGQPRS (816 aa)). The SMP-LTD domain occupies 118 to 295 (DVERVEWANK…LPNRVTVPVK (178 aa)). C2 domains lie at 292 to 412 (VPVK…DEWF) and 430 to 570 (SLLT…QLDH). Ca(2+)-binding residues include lysine 325, aspartate 326, aspartate 336, aspartate 383, glutamate 384, aspartate 385, aspartate 387, aspartate 389, and aspartate 390. Residues 652–711 (SAATTDPEPMPEPQGPGPEPKGKDSARGLCESPGKKKNPATTFLTVPGLHSPGPIKSPRP) form a disordered region. Over residues 659 to 670 (EPMPEPQGPGPE) the composition is skewed to pro residues. The region spanning 759–881 (RLGEIQLTVR…DLIKGFSQWY (123 aa)) is the C2 3 domain. Residues 806–813 (RRWASRKK) are required for phosphatidylinositol 4,5-bisphosphate-dependent location at the cell membrane.

It belongs to the extended synaptotagmin family.

Its subcellular location is the cell membrane. It localises to the endoplasmic reticulum membrane. Functionally, tethers the endoplasmic reticulum to the cell membrane and promotes the formation of appositions between the endoplasmic reticulum and the cell membrane. Binds glycerophospholipids in a barrel-like domain and may play a role in cellular lipid transport. In Mus musculus (Mouse), this protein is Extended synaptotagmin-3 (Esyt3).